The chain runs to 83 residues: Transmembrane protein EP84R (83 aa).

A run of 2 helical transmembrane segments spans residues 31-51 (VIGI…IIIL) and 59-79 (AGSV…FLIY).

It belongs to the asfivirus EP84R family.

It localises to the virion membrane. This Ornithodoros (relapsing fever ticks) protein is Transmembrane protein EP84R.